Here is a 763-residue protein sequence, read N- to C-terminus: Phosphoglycerol transferase I (763 aa).

The next 4 helical transmembrane spans lie at 4–19 (LLSF…IYAW), 26–48 (WWFA…LFAS), 76–98 (YILP…GWIL), and 105–127 (PHHF…ASPA).

The protein belongs to the OpgB family.

It is found in the cell inner membrane. It catalyses the reaction a phosphatidylglycerol + a membrane-derived-oligosaccharide D-glucose = a 1,2-diacyl-sn-glycerol + a membrane-derived-oligosaccharide 6-(glycerophospho)-D-glucose.. It functions in the pathway glycan metabolism; osmoregulated periplasmic glucan (OPG) biosynthesis. Functionally, transfers a phosphoglycerol residue from phosphatidylglycerol to the membrane-bound nascent glucan backbones. This Escherichia coli O157:H7 protein is Phosphoglycerol transferase I.